The primary structure comprises 404 residues: MSVGMAAPRAAYGCDPDRSRGRQFAEPPSNNRSAFRRDCDRVIHSNAFRRLKHKTQVFVFHEGDHYRTRLTHSLEVAQIARAIARQLGLDEDLTETLALAHDLGHPPFGHAGERALDACLRAHGGFDHNAQTLRVLTALEHRYPEFDGLNLTWETLEGVVKHNGPLTDRAGRPLPRYAERGVPIGIVEFSQRFDLELWSFASLEAQVAAIADDIAYDAHDIDDGLRAGLFRVDDLRAVPLTASIIDGIARRYPALDESRRGAELVRELISHLIGAVTAETMRRLGEAAPRSAEEVRHASSAMVAFPIETAAAEAEIKAFLWTHMYRANRVMAVMRDAEAIVADLFQRYCDHPADLPPDWLPTDGPVAECEADRLRRIRNFIAGMTDRYALTEHQRLFDSTPDLR.

A disordered region spans residues 1–33 (MSVGMAAPRAAYGCDPDRSRGRQFAEPPSNNRS). In terms of domain architecture, HD spans 69 to 217 (RLTHSLEVAQ…AAIADDIAYD (149 aa)).

Belongs to the dGTPase family. Type 2 subfamily.

This chain is Deoxyguanosinetriphosphate triphosphohydrolase-like protein, found in Rhodopseudomonas palustris (strain BisB5).